Consider the following 91-residue polypeptide: UPF0358 protein Sca_0738 (91 aa).

It belongs to the UPF0358 family.

The sequence is that of UPF0358 protein Sca_0738 from Staphylococcus carnosus (strain TM300).